Consider the following 562-residue polypeptide: Formate--tetrahydrofolate ligase (562 aa).

71–78 (TPAGEGKS) is an ATP binding site.

It belongs to the formate--tetrahydrofolate ligase family.

It catalyses the reaction (6S)-5,6,7,8-tetrahydrofolate + formate + ATP = (6R)-10-formyltetrahydrofolate + ADP + phosphate. Its pathway is one-carbon metabolism; tetrahydrofolate interconversion. The sequence is that of Formate--tetrahydrofolate ligase from Bacillus cereus (strain Q1).